The following is a 102-amino-acid chain: UPF0213 protein Spro_0507 (102 aa).

The region spanning 6–81 is the GIY-YIG domain; that stretch reads PTWHLYMLRM…KQLSKTQKER (76 aa).

The protein belongs to the UPF0213 family.

This is UPF0213 protein Spro_0507 from Serratia proteamaculans (strain 568).